Reading from the N-terminus, the 101-residue chain is Small ribosomal subunit protein bS6 (101 aa).

It belongs to the bacterial ribosomal protein bS6 family. Part of the 30S ribosomal subunit. Forms a tight heterodimer with protein bS18.

Functionally, located on the outer edge of the platform on the body of the 30S subunit. The chain is Small ribosomal subunit protein bS6 (rpsF) from Thermus thermophilus (strain ATCC BAA-163 / DSM 7039 / HB27).